The sequence spans 262 residues: Shikimate dehydrogenase (NADP(+)) (262 aa).

Shikimate contacts are provided by residues 15 to 17 and Thr-62; that span reads SRS. The Proton acceptor role is filled by Lys-66. Glu-78 lines the NADP(+) pocket. Residues Asn-87 and Asp-102 each contribute to the shikimate site. NADP(+) contacts are provided by residues 126-130, 150-155, and Met-214; these read GAGGA and NRTLAR. Tyr-216 contributes to the shikimate binding site. Gly-236 provides a ligand contact to NADP(+).

The protein belongs to the shikimate dehydrogenase family. Homodimer.

The enzyme catalyses shikimate + NADP(+) = 3-dehydroshikimate + NADPH + H(+). The protein operates within metabolic intermediate biosynthesis; chorismate biosynthesis; chorismate from D-erythrose 4-phosphate and phosphoenolpyruvate: step 4/7. Its function is as follows. Involved in the biosynthesis of the chorismate, which leads to the biosynthesis of aromatic amino acids. Catalyzes the reversible NADPH linked reduction of 3-dehydroshikimate (DHSA) to yield shikimate (SA). The sequence is that of Shikimate dehydrogenase (NADP(+)) from Acinetobacter baumannii (strain ATCC 17978 / DSM 105126 / CIP 53.77 / LMG 1025 / NCDC KC755 / 5377).